Consider the following 206-residue polypeptide: Peroxynitrite isomerase (206 aa).

A GXWXGXG motif is present at residues 21 to 27 (GTWEGNG). His190 lines the heme b pocket.

This sequence belongs to the nitrobindin family. Homodimer. Requires heme b as cofactor.

It carries out the reaction peroxynitrite = nitrate. Its pathway is nitrogen metabolism. Functionally, heme-binding protein able to scavenge peroxynitrite and to protect free L-tyrosine against peroxynitrite-mediated nitration, by acting as a peroxynitrite isomerase that converts peroxynitrite to nitrate. Therefore, this protein likely plays a role in peroxynitrite sensing and in the detoxification of reactive nitrogen and oxygen species (RNS and ROS, respectively). Is able to bind nitric oxide (NO) in vitro, but may act as a sensor of peroxynitrite levels in vivo. This chain is Peroxynitrite isomerase, found in Kocuria rhizophila (strain ATCC 9341 / DSM 348 / NBRC 103217 / DC2201).